The chain runs to 451 residues: UDP-N-acetylmuramoylalanine--D-glutamate ligase (451 aa).

118-124 is a binding site for ATP; sequence GTKGKST.

The protein belongs to the MurCDEF family.

It is found in the cytoplasm. It carries out the reaction UDP-N-acetyl-alpha-D-muramoyl-L-alanine + D-glutamate + ATP = UDP-N-acetyl-alpha-D-muramoyl-L-alanyl-D-glutamate + ADP + phosphate + H(+). It functions in the pathway cell wall biogenesis; peptidoglycan biosynthesis. Its function is as follows. Cell wall formation. Catalyzes the addition of glutamate to the nucleotide precursor UDP-N-acetylmuramoyl-L-alanine (UMA). This Borreliella burgdorferi (strain ATCC 35210 / DSM 4680 / CIP 102532 / B31) (Borrelia burgdorferi) protein is UDP-N-acetylmuramoylalanine--D-glutamate ligase (murD).